The chain runs to 300 residues: Geranylgeranyl pyrophosphate synthase (300 aa).

M1 is modified (N-acetylmethionine). The isopentenyl diphosphate site is built by K25, R28, and H57. The Mg(2+) site is built by D64 and D68. R73 lines the dimethylallyl diphosphate pocket. R74 contacts isopentenyl diphosphate. Positions 151, 152, 185, 202, and 212 each coordinate dimethylallyl diphosphate.

The protein belongs to the FPP/GGPP synthase family. In terms of assembly, homohexamer; trimer of homodimers. Requires Mg(2+) as cofactor.

It is found in the cytoplasm. It localises to the perinuclear region. Its subcellular location is the myofibril. The protein localises to the sarcomere. The protein resides in the z line. It catalyses the reaction isopentenyl diphosphate + dimethylallyl diphosphate = (2E)-geranyl diphosphate + diphosphate. It carries out the reaction isopentenyl diphosphate + (2E)-geranyl diphosphate = (2E,6E)-farnesyl diphosphate + diphosphate. The enzyme catalyses isopentenyl diphosphate + (2E,6E)-farnesyl diphosphate = (2E,6E,10E)-geranylgeranyl diphosphate + diphosphate. Its pathway is isoprenoid biosynthesis; farnesyl diphosphate biosynthesis; farnesyl diphosphate from geranyl diphosphate and isopentenyl diphosphate: step 1/1. The protein operates within isoprenoid biosynthesis; geranyl diphosphate biosynthesis; geranyl diphosphate from dimethylallyl diphosphate and isopentenyl diphosphate: step 1/1. It participates in isoprenoid biosynthesis; geranylgeranyl diphosphate biosynthesis; geranylgeranyl diphosphate from farnesyl diphosphate and isopentenyl diphosphate: step 1/1. In terms of biological role, catalyzes the trans-addition of the three molecules of IPP onto DMAPP to form geranylgeranyl pyrophosphate, an important precursor of carotenoids and geranylated proteins. The chain is Geranylgeranyl pyrophosphate synthase (GGPS1) from Bos taurus (Bovine).